The chain runs to 153 residues: Large ribosomal subunit protein uL15 (153 aa).

Positions Met1 to Gly49 are disordered. A compositionally biased stretch (gly residues) spans Arg21 to Ala31.

It belongs to the universal ribosomal protein uL15 family. As to quaternary structure, part of the 50S ribosomal subunit.

Functionally, binds to the 23S rRNA. This chain is Large ribosomal subunit protein uL15, found in Desulfovibrio desulfuricans (strain ATCC 27774 / DSM 6949 / MB).